The chain runs to 146 residues: Hemoglobin subunit beta-2 (146 aa).

A Globin domain is found at 2 to 146 (EWTNFERATI…VVSSLGKQYH (145 aa)). Heme b contacts are provided by histidine 63 and histidine 92.

It belongs to the globin family. In terms of assembly, hb2 is a heterotetramer of two alpha chains and two beta-2 chains. As to expression, red blood cells.

In terms of biological role, involved in oxygen transport from gills to the various peripheral tissues. The polypeptide is Hemoglobin subunit beta-2 (hbb2) (Cygnodraco mawsoni (Antarctic dragonfish)).